The following is a 415-amino-acid chain: Gamma-glutamyl phosphate reductase (415 aa).

The protein belongs to the gamma-glutamyl phosphate reductase family.

It localises to the cytoplasm. It carries out the reaction L-glutamate 5-semialdehyde + phosphate + NADP(+) = L-glutamyl 5-phosphate + NADPH + H(+). The protein operates within amino-acid biosynthesis; L-proline biosynthesis; L-glutamate 5-semialdehyde from L-glutamate: step 2/2. Catalyzes the NADPH-dependent reduction of L-glutamate 5-phosphate into L-glutamate 5-semialdehyde and phosphate. The product spontaneously undergoes cyclization to form 1-pyrroline-5-carboxylate. This Mycolicibacterium vanbaalenii (strain DSM 7251 / JCM 13017 / BCRC 16820 / KCTC 9966 / NRRL B-24157 / PYR-1) (Mycobacterium vanbaalenii) protein is Gamma-glutamyl phosphate reductase.